Consider the following 329-residue polypeptide: uncharacterized protein (329 aa).

The next 10 helical transmembrane spans lie at Leu-9 to Val-29, Ser-53 to Ile-73, Phe-105 to Ile-125, Ala-126 to Asn-146, Trp-154 to Gly-174, Leu-179 to Phe-199, Val-210 to Ile-230, Trp-240 to Leu-260, Ala-273 to Gln-293, and Leu-296 to Tyr-316. 2 consecutive EamA domains span residues Cys-103–Pro-169 and Ile-191–Tyr-316.

Belongs to the EamA transporter family.

It localises to the cell membrane. This is an uncharacterized protein from Synechocystis sp. (strain ATCC 27184 / PCC 6803 / Kazusa).